The primary structure comprises 287 residues: MAGAKEIRSKIASIKSTQKITSAMEKVAVSKMRKAQLRMAASRPYAERIRQVIGHLAKANPEYKHPFMVERPVKRVGYILVSTDRGLCGGLNINLFKALIKSMKEWHDKGVEADFCVIGNKGASFFRSYGGNVVAAIGNLGEEPSINSLIGSIKVMLDAFHEGRVDRLYLASNKFINTMTQKPVVEQLLPLAASDDEGVQKGTWDYLYEPNAQQLLDALLVRYMESQVYQAVVENGAAEQAARMIAMKNATDNAGELISDLQLVYNKARQAAITQEISEIVGGAAAV.

This sequence belongs to the ATPase gamma chain family. As to quaternary structure, F-type ATPases have 2 components, CF(1) - the catalytic core - and CF(0) - the membrane proton channel. CF(1) has five subunits: alpha(3), beta(3), gamma(1), delta(1), epsilon(1). CF(0) has three main subunits: a, b and c.

The protein resides in the cell inner membrane. Functionally, produces ATP from ADP in the presence of a proton gradient across the membrane. The gamma chain is believed to be important in regulating ATPase activity and the flow of protons through the CF(0) complex. This chain is ATP synthase gamma chain, found in Azotobacter vinelandii (strain DJ / ATCC BAA-1303).